Reading from the N-terminus, the 230-residue chain is Cytidylate kinase (230 aa).

ATP is bound at residue 16-24 (GPASAGKST).

The protein belongs to the cytidylate kinase family. Type 1 subfamily.

It localises to the cytoplasm. The enzyme catalyses CMP + ATP = CDP + ADP. The catalysed reaction is dCMP + ATP = dCDP + ADP. The protein is Cytidylate kinase of Lactobacillus gasseri (strain ATCC 33323 / DSM 20243 / BCRC 14619 / CIP 102991 / JCM 1131 / KCTC 3163 / NCIMB 11718 / NCTC 13722 / AM63).